A 1090-amino-acid polypeptide reads, in one-letter code: Exocyst complex component SEC5B (1090 aa).

The segment covering 1–12 (MSSSDDLDEDEL) has biased composition (acidic residues). The segment at 1-126 (MSSSDDLDED…ARKEDDRAWD (126 aa)) is disordered. Over residues 23–46 (RDVTYQKPPSANSRKPVTNLVQQP) the composition is skewed to polar residues. The segment covering 52–62 (AAAPPSKGGAK) has biased composition (low complexity). A compositionally biased stretch (gly residues) spans 96–109 (GGGGDGGGGRGRGG). The span at 110–126 (SGKERGRARKEDDRAWD) shows a compositional bias: basic and acidic residues. At Ser179 the chain carries Phosphoserine. The segment covering 486-502 (VQLSDDTSSMEDNQVQV) has biased composition (polar residues). Disordered stretches follow at residues 486-511 (VQLS…ESAR), 984-1013 (ETVE…QSSV), and 1055-1090 (PVAK…PRRR). The segment covering 999–1010 (RGSEDAISDDKQ) has biased composition (basic and acidic residues). Over residues 1062–1071 (SRTSTDSPSR) the composition is skewed to polar residues.

Belongs to the SEC5 family. In terms of assembly, the exocyst complex is composed of SEC3, SEC5, SEC6, SEC8, SEC10, EXO70A1 and EXO84B.

Component of the exocyst complex involved in the docking of exocytic vesicles with fusion sites on the plasma membrane during regulated or polarized secretion. Involved in polarized cell growth and organ morphogenesis. During cytokinesis, involved in cell plate initiation, cell plate maturation and formation of new primary cell wall. In Arabidopsis thaliana (Mouse-ear cress), this protein is Exocyst complex component SEC5B (SEC5B).